The sequence spans 142 residues: Small ribosomal subunit protein uS12y (142 aa).

A Hydroxyproline modification is found at P61.

It belongs to the universal ribosomal protein uS12 family.

The sequence is that of Small ribosomal subunit protein uS12y (RPS23B) from Arabidopsis thaliana (Mouse-ear cress).